The sequence spans 2605 residues: Non-reducing polyketide synthase dbaI (2605 aa).

Residues 97 to 243 (PNTLLIPLVM…PASEISDLHR (147 aa)) are N-terminal acylcarrier protein transacylase domain (SAT). The active-site Nucleophile; for transacylase activity is cysteine 144. Histidine 262 acts as the Proton donor/acceptor; for transacylase activity in catalysis. Positions 382–798 (ENDIAVVGMS…GSNASIVVTQ (417 aa)) constitute a Ketosynthase family 3 (KS3) domain. Residues cysteine 547, histidine 682, and histidine 721 each act as for beta-ketoacyl synthase activity in the active site. The malonyl-CoA:ACP transacylase (MAT) domain stretch occupies residues 908–1195 (FGGQVSTFVG…VTNMASRALG (288 aa)). Positions 1285–1420 (PNTLLTFVGY…GRVIFRSISD (136 aa)) are N-terminal hotdog fold. The PKS/mFAS DH domain maps to 1285 to 1596 (PNTLLTFVGY…YVKIPKASMS (312 aa)). The interval 1316-1594 (LIRGHIIAQT…ISYVKIPKAS (279 aa)) is product template (PT) domain. Residue histidine 1320 is the Proton acceptor; for dehydratase activity of the active site. Positions 1447-1596 (EVDEVLQNRN…YVKIPKASMS (150 aa)) are C-terminal hotdog fold. Aspartate 1504 acts as the Proton donor; for dehydratase activity in catalysis. Positions 1665 to 1739 (GQLTQRIKSI…SLIKCVRKAM (75 aa)) constitute a Carrier domain. At serine 1699 the chain carries O-(pantetheine 4'-phosphoryl)serine. The tract at residues 1742–1780 (DADSAEYTTEQSTSEAADSDDKSTNYTTPSTPGEEALDM) is disordered. The segment covering 1747-1757 (EYTTEQSTSEA) has biased composition (polar residues). Positions 1963–2151 (DWPLNRLFYR…VGYGHVDWTD (189 aa)) are methyltransferase domain. The segment at 2230-2473 (VTGATGSLGC…LSWTPVDVVA (244 aa)) is NADPH-binding (R) domain.

The enzyme catalyses 4 malonyl-CoA + acetyl-CoA + AH2 + S-adenosyl-L-methionine + 3 H(+) = 2,4-dihydroxy-3-methyl-6-(2-oxopropyl)benzaldehyde + A + S-adenosyl-L-homocysteine + 4 CO2 + 5 CoA + H2O. The protein operates within secondary metabolite biosynthesis. In terms of biological role, non-reducing polyketide synthase; part of the gene cluster that mediates the biosynthesis of the antibiotic 2,4-dihydroxy-3-methyl-6-(2-oxopropyl)benzaldehyde (DHMBA) and its derivatives. The direct non-reducing polyketide synthase dbaI product is 2,4-dihydroxy-3-methyl-6-(2-oxopropyl)benzaldehyde (DHMBA), produced by condensation of one acetyl-CoA starter unit with 4 malonyl-CoA units and one methylation step. The FAD-dependent monooxygenase dbaH is responsible for the synthesis of yellow pigments derived from the oxidation of DHMBA. The roles of dbaB, C, E and F have still to be determined. The chain is Non-reducing polyketide synthase dbaI from Emericella nidulans (strain FGSC A4 / ATCC 38163 / CBS 112.46 / NRRL 194 / M139) (Aspergillus nidulans).